A 315-amino-acid chain; its full sequence is DNA-directed RNA polymerase subunit alpha (315 aa).

The tract at residues 1–228 (MAQFQIECVE…DLFNPLKDIS (228 aa)) is alpha N-terminal domain (alpha-NTD). Residues 243–315 (TAQIPIEELQ…LPQERSSKHN (73 aa)) form an alpha C-terminal domain (alpha-CTD) region.

This sequence belongs to the RNA polymerase alpha chain family. Homodimer. In cyanobacteria the RNAP catalytic core is composed of 2 alpha, 1 beta, 1 beta', 1 gamma and 1 omega subunit. When a sigma factor is associated with the core the holoenzyme is formed, which can initiate transcription.

It carries out the reaction RNA(n) + a ribonucleoside 5'-triphosphate = RNA(n+1) + diphosphate. DNA-dependent RNA polymerase catalyzes the transcription of DNA into RNA using the four ribonucleoside triphosphates as substrates. In Nostoc sp. (strain PCC 7120 / SAG 25.82 / UTEX 2576), this protein is DNA-directed RNA polymerase subunit alpha.